The following is a 297-amino-acid chain: Bifonsecin B biosynthesis cluster protein A (297 aa).

The signal sequence occupies residues 1 to 20 (MHFWWTAISAGLLCLPQALG). N-linked (GlcNAc...) asparagine glycans are attached at residues N26, N56, N75, N124, N175, N210, and N280.

The protein belongs to the bfoA family.

In terms of biological role, part of the gene cluster that mediates the biosynthesis of bifonsecin B, a dimeric gamma-naphthopyrone. The first step in the biosynthesis of bifonsecin B is the production of gamma-naphthopyrone precursor YWA1 by the non-reducing polyketide synthase albA, via condensation of one acetyl-CoA starter unit with 6 malonyl-CoA units. YWA1 is then methylated by bfoE at position C-6 to yield foncesin which is further methylated at position C-8 by bfoD to produce fonsecin B. A key enzyme in the biosynthetic pathway is the cytochrome P450 monooxygenase bfoB which catalyzes the oxidative dimerization of fonsecin B to bifonsecin B. Bfob also catalyzes the oxidative dimerization of rubrofusarin B into nigerone. The stereoselectivity of bfoB is influenced by the two natural monomeric substrates; homodimerization of fonsecin B yields a stereochemically pure biaryl, M-foncerine B, while rubrofusarin B yields a mixture of enantiomers M- and P-nigerone. The function of bfoA within the bifonsecin B biosynthesis pathway has not been determined yet. The sequence is that of Bifonsecin B biosynthesis cluster protein A from Aspergillus brasiliensis (strain CBS 101740 / IMI 381727 / IBT 21946).